Reading from the N-terminus, the 80-residue chain is Acyl carrier protein (80 aa).

A Carrier domain is found at 4–79; the sequence is DATLEKVRSI…DAVKYIEDKQ (76 aa). Residue serine 39 is modified to O-(pantetheine 4'-phosphoryl)serine.

This sequence belongs to the acyl carrier protein (ACP) family. Post-translationally, 4'-phosphopantetheine is transferred from CoA to a specific serine of apo-ACP by AcpS. This modification is essential for activity because fatty acids are bound in thioester linkage to the sulfhydryl of the prosthetic group.

The protein localises to the cytoplasm. It functions in the pathway lipid metabolism; fatty acid biosynthesis. In terms of biological role, carrier of the growing fatty acid chain in fatty acid biosynthesis. The polypeptide is Acyl carrier protein (Prochlorococcus marinus (strain MIT 9211)).